The chain runs to 228 residues: Large ribosomal subunit protein uL16 (228 aa).

This sequence belongs to the universal ribosomal protein uL16 family. Component of the small ribosomal subunit. Mature ribosomes consist of a small (40S) and a large (60S) subunit. The 40S subunit contains about 33 different proteins and 1 molecule of RNA (18S). The 60S subunit contains about 49 different proteins and 3 molecules of RNA (25S, 5.8S and 5S).

This is Large ribosomal subunit protein uL16 (RPL10) from Pinus taeda (Loblolly pine).